Here is a 1375-residue protein sequence, read N- to C-terminus: Probable GMP synthase [glutamine-hydrolyzing] (1375 aa).

The Glutamine amidotransferase type-1; first part domain occupies 7 to 119 (QILVLDFGSQ…VLEIMESSQD (113 aa)). Cys-84 functions as the Nucleophile in the catalytic mechanism. The interval 120-500 (SKDSSCFAFQ…NNATQGFKSC (381 aa)) is insert-1. 2 consecutive N-acetyltransferase domains span residues 141–300 (LSFD…KALE) and 318–484 (VFLR…LEKK). Positions 501–580 (SLFKGIKQDS…AVGICGANTC (80 aa)) constitute a Glutamine amidotransferase type-1; second part domain. Active-site residues include His-554 and Glu-556. The segment at 597–1071 (IVYGGKAHCE…SGVANSLKIT (475 aa)) is insert-2. The N-acetyltransferase 3 domain maps to 612 to 765 (MQIQEAFKHI…ELIPLSIARE (154 aa)). Residues 1011–1036 (RIVDSQHTESSDIKGQSHLESSADSG) form a disordered region. Basic and acidic residues predominate over residues 1014–1027 (DSQHTESSDIKGQS). One can recognise a GMPS ATP-PPase domain in the interval 1055–1250 (YLEGNDRSGV…LGMPESMLMR (196 aa)). Position 1083–1089 (1083–1089 (SGGVDSS)) interacts with ATP.

In terms of assembly, homodimer.

The enzyme catalyses XMP + L-glutamine + ATP + H2O = GMP + L-glutamate + AMP + diphosphate + 2 H(+). The protein operates within purine metabolism; GMP biosynthesis; GMP from XMP (L-Gln route): step 1/1. Functionally, catalyzes the synthesis of GMP from XMP. This Helicobacter hepaticus (strain ATCC 51449 / 3B1) protein is Probable GMP synthase [glutamine-hydrolyzing] (guaA).